We begin with the raw amino-acid sequence, 1313 residues long: Angiotensin-converting enzyme (1313 aa).

The first 35 residues, 1 to 35 (MGAASGQRGRWPLSPPLLMLSLLLLLLLPPSPAPA), serve as a signal peptide directing secretion. Residues 36–1265 (LDPGLQPGNF…LEPQQARVGQ (1230 aa)) lie on the Extracellular side of the membrane. Asn-44, Asn-60, Asn-80, Asn-117, Asn-152, and Asn-166 each carry an N-linked (GlcNAc...) asparagine glycan. Peptidase M2 domains follow at residues 46 to 630 (SADE…LGWP) and 649 to 1228 (ETDE…LGWP). An intrachain disulfide couples Cys-163 to Cys-171. Tyr-237 provides a ligand contact to chloride. N-linked (GlcNAc...) asparagine glycosylation is present at Asn-324. An intrachain disulfide couples Cys-365 to Cys-383. Residue His-396 participates in Zn(2+) binding. Glu-397 (proton acceptor 1) is an active-site residue. Positions 400 and 424 each coordinate Zn(2+). A glycan (N-linked (GlcNAc...) asparagine) is linked at Asn-515. The Proton donor 1 role is filled by His-526. Arg-535 contributes to the chloride binding site. A disulfide bridge links Cys-551 with Cys-563. 4 N-linked (GlcNAc...) asparagine glycosylation sites follow: Asn-683, Asn-701, Asn-720, and Asn-766. An intrachain disulfide couples Cys-763 to Cys-769. Residues Arg-797 and Tyr-835 each coordinate chloride. Residue Asn-948 is glycosylated (N-linked (GlcNAc...) asparagine). Cysteines 963 and 981 form a disulfide. His-994 serves as a coordination point for Zn(2+). Glu-995 acts as the Proton acceptor 2 in catalysis. Residues His-998 and Glu-1022 each coordinate Zn(2+). 2 residues coordinate chloride: Trp-1096 and Arg-1100. His-1124 serves as the catalytic Proton donor 2. Arg-1133 is a chloride binding site. Cys-1149 and Cys-1161 are oxidised to a cystine. N-linked (GlcNAc...) asparagine glycosylation occurs at Asn-1197. The interval 1221 to 1262 (HGETLGWPEYTWTPNTARAEGSLPESSRVNFLGMYLEPQQAR) is juxtamembrane stalk. Residues 1266 to 1282 (WVLLFLGVALLVATVGL) traverse the membrane as a helical segment. Residues 1283–1313 (AHRLYNIHNHHSLRRPHRGPQFGSEVELRHS) lie on the Cytoplasmic side of the membrane. The residue at position 1306 (Ser-1306) is a Phosphoserine.

Belongs to the peptidase M2 family. In terms of assembly, monomer and homodimer; homodimerizes following binding to an inhibitor. Interacts with calmodulin (CALM1, CALM2 or CALM3); interaction takes place in the cytoplasmic region and regulates phosphorylation and proteolytic cleavage. It depends on Zn(2+) as a cofactor. Chloride serves as cofactor. Produced following proteolytic cleavage by secretase enzymes that cleave the transmembrane form in the juxtamembrane stalk region upstream of the transmembrane region. Cleavage can take place at different sites of the juxtamembrane stalk region. In terms of processing, phosphorylated by CK2 on Ser-1306; which allows membrane retention. Phosphorylated on tyrosine residues on its extracellular part, promoting cleavage by secretase enzymes and formation of the soluble form (Angiotensin-converting enzyme, soluble form). In terms of tissue distribution, expressed in brain, kidney, lung, skeletal muscle and heart. Testis-specific isoform is expressed in spermatocytes, adult testis.

Its subcellular location is the cell membrane. The protein resides in the cytoplasm. It localises to the secreted. The enzyme catalyses Release of a C-terminal dipeptide, oligopeptide-|-Xaa-Yaa, when Xaa is not Pro, and Yaa is neither Asp nor Glu. Thus, conversion of angiotensin I to angiotensin II, with increase in vasoconstrictor activity, but no action on angiotensin II.. It catalyses the reaction angiotensin I + H2O = L-histidyl-L-leucine + angiotensin II. It carries out the reaction bradykinin + H2O = L-Phe-L-Arg + bradykinin(1-7). The catalysed reaction is substance P + H2O = substance P(1-9) + L-Leu-L-Met-NH2. The enzyme catalyses substance P + H2O = substance P(1-8) + Gly-L-Leu-L-Met-NH2. It catalyses the reaction substance P + H2O = L-Phe-L-Phe-Gly-L-Leu-L-Met-NH2 + substance P(1-6). It carries out the reaction neurotensin + H2O = neurotensin(1-11) + L-isoleucyl-L-leucine. The catalysed reaction is goralatide + H2O = N-acetyl-L-seryl-L-aspartate + L-lysyl-L-proline. The enzyme catalyses Met-enkephalin + H2O = L-phenylalanyl-L-methionine + L-tyrosylglycylglycine. It catalyses the reaction Leu-enkephalin + H2O = L-tyrosylglycylglycine + L-phenylalanyl-L-leucine. It carries out the reaction Met-enkephalin-Arg-Phe + H2O = L-arginyl-L-phenylalanine + Met-enkephalin. Its activity is regulated as follows. The dipeptidyl carboxypeptidase activity is strongly activated by chloride. The dipeptidyl carboxypeptidase activity is specifically inhibited by lisinopril, captopril and enalaprilat. With respect to regulation, strongly inhibited by lisinopril and captopril. Its function is as follows. Dipeptidyl carboxypeptidase that removes dipeptides from the C-terminus of a variety of circulating hormones, such as angiotensin I, bradykinin or enkephalins, thereby playing a key role in the regulation of blood pressure, electrolyte homeostasis or synaptic plasticity. Composed of two similar catalytic domains, each possessing a functional active site, with different selectivity for substrates. Plays a major role in the angiotensin-renin system that regulates blood pressure and sodium retention by the kidney by converting angiotensin I to angiotensin II, resulting in an increase of the vasoconstrictor activity of angiotensin. Also able to inactivate bradykinin, a potent vasodilator, and therefore enhance the blood pressure response. Acts as a regulator of synaptic transmission by mediating cleavage of neuropeptide hormones, such as substance P, neurotensin or enkephalins. Catalyzes degradation of different enkephalin neuropeptides (Met-enkephalin, Leu-enkephalin, Met-enkephalin-Arg-Phe and possibly Met-enkephalin-Arg-Gly-Leu). Acts as a regulator of synaptic plasticity in the nucleus accumbens of the brain by mediating cleavage of Met-enkephalin-Arg-Phe, a strong ligand of Mu-type opioid receptor OPRM1, into Met-enkephalin. Met-enkephalin-Arg-Phe cleavage by ACE decreases activation of OPRM1, leading to long-term synaptic potentiation of glutamate release. Also acts as a regulator of hematopoietic stem cell differentiation by mediating degradation of hemoregulatory peptide N-acetyl-SDKP (AcSDKP). Acts as a regulator of cannabinoid signaling pathway by mediating degradation of hemopressin, an antagonist peptide of the cannabinoid receptor CNR1. Involved in amyloid-beta metabolism by catalyzing degradation of Amyloid-beta protein 40 and Amyloid-beta protein 42 peptides, thereby preventing plaque formation. Catalyzes cleavage of cholecystokinin (maturation of Cholecystokinin-8 and Cholecystokinin-5) and Gonadoliberin-1 (both maturation and degradation) hormones. Degradation of hemoregulatory peptide N-acetyl-SDKP (AcSDKP) and amyloid-beta proteins is mediated by the N-terminal catalytic domain, while angiotensin I and cholecystokinin cleavage is mediated by the C-terminal catalytic region. In terms of biological role, soluble form that is released in blood plasma and other body fluids following proteolytic cleavage in the juxtamembrane stalk region. Functionally, isoform produced by alternative promoter usage that is specifically expressed in spermatocytes and adult testis, and which is required for male fertility. In contrast to somatic isoforms, only contains one catalytic domain. Acts as a dipeptidyl carboxypeptidase that removes dipeptides from the C-terminus of substrates. The identity of substrates that are needed for male fertility is unknown. May also have a glycosidase activity which releases GPI-anchored proteins from the membrane by cleaving the mannose linkage in the GPI moiety. The GPIase activity was reported to be essential for the egg-binding ability of the sperm. This activity is however unclear and has been challenged by other groups, suggesting that it may be indirect. This chain is Angiotensin-converting enzyme, found in Rattus norvegicus (Rat).